The chain runs to 201 residues: ATP-dependent Clp protease proteolytic subunit (201 aa).

The active-site Nucleophile is the serine 97. Residue histidine 122 is part of the active site.

The protein belongs to the peptidase S14 family. Fourteen ClpP subunits assemble into 2 heptameric rings which stack back to back to give a disk-like structure with a central cavity, resembling the structure of eukaryotic proteasomes.

The protein localises to the cytoplasm. The enzyme catalyses Hydrolysis of proteins to small peptides in the presence of ATP and magnesium. alpha-casein is the usual test substrate. In the absence of ATP, only oligopeptides shorter than five residues are hydrolyzed (such as succinyl-Leu-Tyr-|-NHMec, and Leu-Tyr-Leu-|-Tyr-Trp, in which cleavage of the -Tyr-|-Leu- and -Tyr-|-Trp bonds also occurs).. Its function is as follows. Cleaves peptides in various proteins in a process that requires ATP hydrolysis. Has a chymotrypsin-like activity. Plays a major role in the degradation of misfolded proteins. This Nitratidesulfovibrio vulgaris (strain ATCC 29579 / DSM 644 / CCUG 34227 / NCIMB 8303 / VKM B-1760 / Hildenborough) (Desulfovibrio vulgaris) protein is ATP-dependent Clp protease proteolytic subunit.